The following is a 224-amino-acid chain: Peroxiredoxin-6 (224 aa).

The region spanning leucine 5 to leucine 169 is the Thioredoxin domain. The segment at aspartate 31 to proline 40 is required and sufficient for targeting to lysosomes and lamellar bodies. A Phosphothreonine modification is found at threonine 44. Cysteine 47 acts as the Cysteine sulfenic acid (-SOH) intermediate; for peroxidase activity in catalysis. N6-acetyllysine is present on lysine 63. Tyrosine 89 carries the phosphotyrosine modification. The For phospholipase activity role is filled by aspartate 140. Threonine 177 bears the Phosphothreonine; by MAPK mark. Lysine 209 carries the post-translational modification N6-acetyllysine; alternate. Lysine 209 carries the post-translational modification N6-succinyllysine; alternate.

This sequence belongs to the peroxiredoxin family. Prx6 subfamily. Homodimer. Interacts with GSTP1; mediates PRDX6 glutathionylation and regeneration. Interacts with APEX1. Interacts with STH. May interact with FAM168B. May interact with HTR2A. In terms of processing, irreversibly inactivated by overoxidation of Cys-47 to sulfinic acid (Cys-SO(2)H) and sulfonic acid (Cys-SO(3)H) forms upon oxidative stress. Phosphorylation at Thr-177 by MAP kinases increases the phospholipase activity of the enzyme. The phosphorylated form exhibits a greater lysophosphatidylcholine acyltransferase activity compared to the non-phosphorylated form.

The protein resides in the cytoplasm. It is found in the lysosome. It catalyses the reaction a hydroperoxide + 2 glutathione = an alcohol + glutathione disulfide + H2O. The catalysed reaction is a 1,2-diacyl-sn-glycero-3-phosphocholine + H2O = a 1-acyl-sn-glycero-3-phosphocholine + a fatty acid + H(+). It carries out the reaction a 1-acyl-sn-glycero-3-phosphocholine + an acyl-CoA = a 1,2-diacyl-sn-glycero-3-phosphocholine + CoA. The enzyme catalyses 1-hexadecanoyl-sn-glycero-3-phosphocholine + hexadecanoyl-CoA = 1,2-dihexadecanoyl-sn-glycero-3-phosphocholine + CoA. It catalyses the reaction 1,2-dihexadecanoyl-sn-glycero-3-phosphocholine + H2O = 1-hexadecanoyl-sn-glycero-3-phosphocholine + hexadecanoate + H(+). In terms of biological role, thiol-specific peroxidase that catalyzes the reduction of hydrogen peroxide and organic hydroperoxides to water and alcohols, respectively. Can reduce H(2)O(2) and short chain organic, fatty acid, and phospholipid hydroperoxides. Also has phospholipase activity, and can therefore either reduce the oxidized sn-2 fatty acyl group of phospholipids (peroxidase activity) or hydrolyze the sn-2 ester bond of phospholipids (phospholipase activity). These activities are dependent on binding to phospholipids at acidic pH and to oxidized phospholipds at cytosolic pH. Plays a role in cell protection against oxidative stress by detoxifying peroxides and in phospholipid homeostasis. Exhibits acyl-CoA-dependent lysophospholipid acyltransferase which mediates the conversion of lysophosphatidylcholine (1-acyl-sn-glycero-3-phosphocholine or LPC) into phosphatidylcholine (1,2-diacyl-sn-glycero-3-phosphocholine or PC). Shows a clear preference for LPC as the lysophospholipid and for palmitoyl CoA as the fatty acyl substrate. The sequence is that of Peroxiredoxin-6 (PRDX6) from Sus scrofa (Pig).